The chain runs to 89 residues: Neuropeptide S (89 aa).

Residues 1–23 (MIGSLKFNFILFLLISTMHMFWC) form the signal peptide. Positions 24–67 (HPISSSKVPGKSDYFVILLNSCPTRMDRRVGLDFLKPILEKTLM) are excised as a propeptide.

The protein localises to the secreted. Functionally, modulates arousal and anxiety. May play an important anorexigenic role. Binds to its receptor NPSR1 with nanomolar affinity to increase intracellular calcium concentrations. In Bos taurus (Bovine), this protein is Neuropeptide S (NPS).